The chain runs to 628 residues: Chaperone protein HtpG (628 aa).

The segment at 1-339 (MSNNQQTLGF…SNDLPLNVSR (339 aa)) is a; substrate-binding. Positions 340 to 556 (EILQDNKTTA…NDQMTTQMAK (217 aa)) are b. The c stretch occupies residues 557-628 (LFAMSGQPVP…IKRVNTLLAG (72 aa)).

The protein belongs to the heat shock protein 90 family. Homodimer.

It localises to the cytoplasm. Molecular chaperone. Has ATPase activity. The chain is Chaperone protein HtpG from Actinobacillus succinogenes (strain ATCC 55618 / DSM 22257 / CCUG 43843 / 130Z).